Reading from the N-terminus, the 200-residue chain is Cytochrome c biogenesis ATP-binding export protein CcmA (200 aa).

Residues 1 to 199 enclose the ABC transporter domain; the sequence is MRLTGRGLRC…AARELRIGGA (199 aa). 35–42 serves as a coordination point for ATP; that stretch reads GANGAGKT.

Belongs to the ABC transporter superfamily. CcmA exporter (TC 3.A.1.107) family. In terms of assembly, the complex is composed of two ATP-binding proteins (CcmA) and two transmembrane proteins (CcmB).

Its subcellular location is the cell inner membrane. The enzyme catalyses heme b(in) + ATP + H2O = heme b(out) + ADP + phosphate + H(+). Functionally, part of the ABC transporter complex CcmAB involved in the biogenesis of c-type cytochromes; once thought to export heme, this seems not to be the case, but its exact role is uncertain. Responsible for energy coupling to the transport system. In Rhodopseudomonas palustris (strain BisB18), this protein is Cytochrome c biogenesis ATP-binding export protein CcmA.